The chain runs to 239 residues: Uridylate kinase (239 aa).

Residue 13–16 participates in ATP binding; sequence KISG. Residue G55 coordinates UMP. ATP is bound by residues G56 and R60. UMP-binding positions include D75 and 136–143; that span reads LGIPFFTT. ATP contacts are provided by T163, Y169, and D172.

This sequence belongs to the UMP kinase family. Homohexamer.

The protein resides in the cytoplasm. The catalysed reaction is UMP + ATP = UDP + ADP. Its pathway is pyrimidine metabolism; CTP biosynthesis via de novo pathway; UDP from UMP (UMPK route): step 1/1. With respect to regulation, inhibited by UTP. Functionally, catalyzes the reversible phosphorylation of UMP to UDP. The sequence is that of Uridylate kinase from Buchnera aphidicola subsp. Cinara cedri (strain Cc).